Reading from the N-terminus, the 95-residue chain is Small ribosomal subunit protein bS21 (95 aa).

Residues 56–95 (KLARKKMQREGLLPMKPKPVFGAGPGAGRGGPAAGPRGPR) are disordered. The span at 78 to 88 (AGPGAGRGGPA) shows a compositional bias: gly residues.

It belongs to the bacterial ribosomal protein bS21 family.

The polypeptide is Small ribosomal subunit protein bS21 (Nitrobacter winogradskyi (strain ATCC 25391 / DSM 10237 / CIP 104748 / NCIMB 11846 / Nb-255)).